Consider the following 283-residue polypeptide: Protein FAM78A (283 aa).

This sequence belongs to the FAM78 family.

This Homo sapiens (Human) protein is Protein FAM78A (FAM78A).